The following is a 397-amino-acid chain: Acetate kinase (397 aa).

Asparagine 7 lines the Mg(2+) pocket. Residue lysine 14 participates in ATP binding. Position 90 (arginine 90) interacts with substrate. Aspartate 147 functions as the Proton donor/acceptor in the catalytic mechanism. ATP contacts are provided by residues 207–211 (HLGNG), 282–284 (DFR), and 330–334 (GLGEN). Glutamate 383 is a Mg(2+) binding site.

Belongs to the acetokinase family. As to quaternary structure, homodimer. The cofactor is Mg(2+). Mn(2+) is required as a cofactor.

The protein localises to the cytoplasm. It carries out the reaction acetate + ATP = acetyl phosphate + ADP. The protein operates within metabolic intermediate biosynthesis; acetyl-CoA biosynthesis; acetyl-CoA from acetate: step 1/2. In terms of biological role, catalyzes the formation of acetyl phosphate from acetate and ATP. Can also catalyze the reverse reaction. The chain is Acetate kinase from Clostridium botulinum (strain ATCC 19397 / Type A).